We begin with the raw amino-acid sequence, 726 residues long: MELGKGKLLRSGINALYQAIHPVHGLAWTDGRQVVLTALHLNNEEPKFGNSIVIGQFEHVHGLYWGPFLANDTPALLAVQHKKHVTVWQLCYSPSDKNKLVVSQTCEIGDPFPVLPQGCTWHPSKDILVVLTKRDVSVLYAVRYENSSLKADIKSSGLIHCACWTKDGSRLVVAIGSALHSYIWDSKQKTLNACAFCPVFDIGGYICAIESTVDSQVAVSTELPLDRICALNAGIAFTMPASSEITISNQPGLLLMEEEFSMDGVQKSADSGSLTTDSLATSPATLDLTHIVNHSKADLNSLLNLKKKDYLTGSGQDSSHLILVSFEKKVTTTRRVSIPGILVPDILAFDPTAHIVAVASNTCSAVLVYSLTSSSVPNIQQIQLEKNERPKGLCFLTDKMLLVLVGRQKTSDPAFLPSSSSDKYLIRLMVKEVMFDEDSSASSGGNTSVQASNDSCMSIQDKKKMVESLYKESPSTHRELLLPSGTAPPTYLRKKKLIEEIRSYDGDQSPTSSANEFDEKRNRLRMESFDTEPKNCSVTLSLDMDKKPISGSTSPKSECQNSSPPNFIQPSDVSPQQEILSISRNVERLCCNFAHLQQHLSELTDITRNGKRPLSASYLPCRQAPYVTVVCQDAYHPEGPAMKRSILLCENKLRLGTVQELFGLSLIEMQLGPSLWIILTGDSEGFIPLTFLANQEITIRDARIAAMHPPLRMDRNNSMQPSSSVT.

2 WD repeats span residues 55 to 98 and 154 to 194; these read GQFE…SDKN and KSSG…LNAC. The tract at residues 502 to 574 is disordered; the sequence is RSYDGDQSPT…PNFIQPSDVS (73 aa). Positions 506–515 are enriched in polar residues; that stretch reads GDQSPTSSAN. Positions 517–533 are enriched in basic and acidic residues; sequence FDEKRNRLRMESFDTEP. Over residues 550 to 574 the composition is skewed to polar residues; sequence SGSTSPKSECQNSSPPNFIQPSDVS. A coiled-coil region spans residues 581–609; that stretch reads SISRNVERLCCNFAHLQQHLSELTDITRN.

This is WD repeat and coiled-coil-containing protein (wdcp) from Xenopus laevis (African clawed frog).